A 525-amino-acid polypeptide reads, in one-letter code: Lymphocyte activation gene 3 protein (525 aa).

The first 22 residues, 1–22 (MWEAQFLGLLFLQPLWVAPVKP), serve as a signal peptide directing secretion. The Extracellular portion of the chain corresponds to 23 to 450 (LQPGAEVPVV…APGALPAGHL (428 aa)). Residues 37-167 (GAPAQLPCSP…LSCRLRLRLG (131 aa)) enclose the Ig-like V-type domain. Residues 37–252 (GAPAQLPCSP…LTYRDGFNVS (216 aa)) form an interaction with FGL1 region. Cysteine 44 and cysteine 160 form a disulfide bridge. The tract at residues 62 to 97 (TWQHQPDSGPPAAAPGHPLAPGPHPAAPSSWGPRPR) is disordered. Residues 69-87 (SGPPAAAPGHPLAPGPHPA) show a composition bias toward pro residues. Residues 168 to 252 (QASMTASPPG…LTYRDGFNVS (85 aa)) enclose the Ig-like C2-type 1 domain. Asparagine 188 carries N-linked (GlcNAc...) asparagine glycosylation. Cysteine 189 and cysteine 241 are joined by a disulfide. Residues asparagine 250 and asparagine 256 are each glycosylated (N-linked (GlcNAc...) asparagine). 2 Ig-like C2-type domains span residues 265 to 343 (PTPL…QQLN) and 348 to 419 (LAII…QGER). Cysteine 282 and cysteine 333 form a disulfide bridge. Asparagine 343 is a glycosylation site (N-linked (GlcNAc...) asparagine). The cysteines at positions 369 and 412 are disulfide-linked. The tract at residues 429–450 (ELSSPGAQRSGRAPGALPAGHL) is connecting peptide. The chain crosses the membrane as a helical span at residues 451–471 (LLFLILGVLSLLLLVTGAFGF). At 472–525 (HLWRRQWRPRRFSALEQGIHPPQAQSKIEELEQEPEPEPEPEPEPEPEPEPEQL) the chain is on the cytoplasmic side. Positions 487 to 525 (EQGIHPPQAQSKIEELEQEPEPEPEPEPEPEPEPEPEQL) are disordered. The KIEELE motif motif lies at 498 to 503 (KIEELE). The 12 X 2 AA tandem repeats of E-X stretch occupies residues 501 to 524 (ELEQEPEPEPEPEPEPEPEPEPEQ). Residues 502 to 525 (LEQEPEPEPEPEPEPEPEPEPEQL) are compositionally biased toward acidic residues.

Belongs to the LAG3 family. Interacts with MHC class II (MHC-II); selectively recognizes stable complexes of peptide and MHC-II. Interacts with FGL1 (via the Fibrinogen C-terminal domain). Proteolytically cleaved by ADAM10 and ADAM17 within the connecting peptide region, leading to release of Secreted lymphocyte activation gene 3 protein (sLAG-3). ADAM10 mediates constitutive cleavage, but cleavage increases following T-cell activation, whereas shedding by ADAM17 is induced by TCR signaling in a PRKCQ-dependent manner. In terms of tissue distribution, primarily expressed in activated T-cells and a subset of natural killer (NK) cells.

The protein localises to the cell membrane. Its subcellular location is the secreted. Its function is as follows. Lymphocyte activation gene 3 protein: Inhibitory receptor on antigen activated T-cells. Delivers inhibitory signals upon binding to ligands, such as FGL1. FGL1 constitutes a major ligand of LAG3 and is responsible for LAG3 T-cell inhibitory function. Following TCR engagement, LAG3 associates with CD3-TCR in the immunological synapse and directly inhibits T-cell activation. May inhibit antigen-specific T-cell activation in synergy with PDCD1/PD-1, possibly by acting as a coreceptor for PDCD1/PD-1. Negatively regulates the proliferation, activation, effector function and homeostasis of both CD8(+) and CD4(+) T-cells. Also mediates immune tolerance: constitutively expressed on a subset of regulatory T-cells (Tregs) and contributes to their suppressive function. Also acts as a negative regulator of plasmacytoid dendritic cell (pDCs) activation. Binds MHC class II (MHC-II); the precise role of MHC-II-binding is however unclear. Functionally, may function as a ligand for MHC class II (MHC-II) on antigen-presenting cells (APC), promoting APC activation/maturation and driving Th1 immune response. In Homo sapiens (Human), this protein is Lymphocyte activation gene 3 protein.